The sequence spans 599 residues: Interleukin-18 receptor accessory protein (599 aa).

An N-terminal signal peptide occupies residues 1–19 (MLCLGWIFLWLVAGERIKG). Over 20–356 (FNISGCSTKK…TQSVQLKEKR (337 aa)) the chain is Extracellular. 3 N-linked (GlcNAc...) asparagine glycosylation sites follow: Asn-21, Asn-119, and Asn-152. A disulfide bond links Cys-46 and Cys-126. 2 Ig-like C2-type domains span residues 149-235 (PQTN…WTVR) and 251-353 (PDIL…VQLK). Disulfide bonds link Cys-155–Cys-180, Cys-175–Cys-221, Cys-180–Cys-221, and Cys-273–Cys-337. An N-linked (GlcNAc...) asparagine glycan is attached at Asn-345. The helical transmembrane segment at 357 to 377 (GVVLLYILLGTIGTLVAVLAA) threads the bilayer. Residues 378–599 (SALLYRHWIE…TGRSSQPKEW (222 aa)) are Cytoplasmic-facing. Residues 406-559 (KDFDAFVSYA…RFWAKMRYHM (154 aa)) form the TIR domain. Glu-493 is a catalytic residue.

This sequence belongs to the interleukin-1 receptor family. Forms a ternary complex with IL18 and IL18R1. Within this complex, IL18R1 is involved in ligand-binding and IL18RAP in signaling leading to NF-kappa-B and JNK activation. N-glycosylated. In terms of tissue distribution, detected in adrenal gland, bone marrow, brain, fetal brain, fetal liver, heart, kidney, lung, liver, peripheral blood leukocytes, placenta, prostate, salivary gland, skeletal muscle, spinal cord, testis, thymus, thyroid, trachea and uterus. Strongly expressed in peripheral blood leukocytes and spleen and, to a lesser extent, in colon. Specifically coexpressed with IL18R1 in T-helper 1 (Th1)cells.

The protein resides in the cell membrane. The enzyme catalyses NAD(+) + H2O = ADP-D-ribose + nicotinamide + H(+). Its function is as follows. Within the IL18 receptor complex, does not mediate IL18-binding, but involved in IL18-dependent signal transduction, leading to NF-kappa-B and JNK activation. May play a role in IL18-mediated IFNG synthesis from T-helper 1 (Th1) cells. The chain is Interleukin-18 receptor accessory protein from Homo sapiens (Human).